The chain runs to 121 residues: Glycine cleavage system H protein (121 aa).

Positions 22–102 (IAWVGITKYA…DSSVWLFKAE (81 aa)) constitute a Lipoyl-binding domain. Lys-63 is modified (N6-lipoyllysine).

Belongs to the GcvH family. As to quaternary structure, the glycine cleavage system is composed of four proteins: P, T, L and H. It depends on (R)-lipoate as a cofactor.

The glycine cleavage system catalyzes the degradation of glycine. The H protein shuttles the methylamine group of glycine from the P protein to the T protein. The protein is Glycine cleavage system H protein of Tropheryma whipplei (strain TW08/27) (Whipple's bacillus).